We begin with the raw amino-acid sequence, 179 residues long: ATP synthase subunit delta (179 aa).

It belongs to the ATPase delta chain family. In terms of assembly, F-type ATPases have 2 components, F(1) - the catalytic core - and F(0) - the membrane proton channel. F(1) has five subunits: alpha(3), beta(3), gamma(1), delta(1), epsilon(1). F(0) has three main subunits: a(1), b(2) and c(10-14). The alpha and beta chains form an alternating ring which encloses part of the gamma chain. F(1) is attached to F(0) by a central stalk formed by the gamma and epsilon chains, while a peripheral stalk is formed by the delta and b chains.

The protein localises to the cell membrane. In terms of biological role, f(1)F(0) ATP synthase produces ATP from ADP in the presence of a proton or sodium gradient. F-type ATPases consist of two structural domains, F(1) containing the extramembraneous catalytic core and F(0) containing the membrane proton channel, linked together by a central stalk and a peripheral stalk. During catalysis, ATP synthesis in the catalytic domain of F(1) is coupled via a rotary mechanism of the central stalk subunits to proton translocation. Functionally, this protein is part of the stalk that links CF(0) to CF(1). It either transmits conformational changes from CF(0) to CF(1) or is implicated in proton conduction. The chain is ATP synthase subunit delta from Staphylococcus aureus (strain USA300 / TCH1516).